The following is a 116-amino-acid chain: Large ribosomal subunit protein uL18 (116 aa).

The protein belongs to the universal ribosomal protein uL18 family. In terms of assembly, part of the 50S ribosomal subunit; part of the 5S rRNA/L5/L18/L25 subcomplex. Contacts the 5S and 23S rRNAs.

Functionally, this is one of the proteins that bind and probably mediate the attachment of the 5S RNA into the large ribosomal subunit, where it forms part of the central protuberance. The sequence is that of Large ribosomal subunit protein uL18 from Mycoplasma mycoides subsp. mycoides SC (strain CCUG 32753 / NCTC 10114 / PG1).